The following is a 253-amino-acid chain: Phosphoglycerate mutase 2 (253 aa).

At threonine 3 the chain carries Phosphothreonine. Substrate contacts are provided by residues 10–17, 23–24, arginine 62, 89–92, lysine 100, and 116–117; these read RHGESTWN, CG, ERHY, and RR. The Tele-phosphohistidine intermediate role is filled by histidine 11. Position 14 is a phosphoserine (serine 14). The active-site Proton donor/acceptor is glutamate 89. The residue at position 118 (serine 118) is a Phosphoserine. Phosphotyrosine is present on residues tyrosine 132 and tyrosine 133. Serine 135 carries the post-translational modification Phosphoserine. Position 152 is a phosphothreonine (threonine 152). Residue 187-188 participates in substrate binding; it reads GN.

This sequence belongs to the phosphoglycerate mutase family. BPG-dependent PGAM subfamily. In terms of assembly, homodimer.

The enzyme catalyses (2R)-2-phosphoglycerate = (2R)-3-phosphoglycerate. It catalyses the reaction (2R)-3-phospho-glyceroyl phosphate = (2R)-2,3-bisphosphoglycerate + H(+). Functionally, interconversion of 3- and 2-phosphoglycerate with 2,3-bisphosphoglycerate as the primer of the reaction. Can also catalyze the reaction of EC 5.4.2.4 (synthase), but with a reduced activity. The sequence is that of Phosphoglycerate mutase 2 (PGAM2) from Bos taurus (Bovine).